The following is a 160-amino-acid chain: Protein Vago (160 aa).

Residues 1-23 (MESISSMIYLVAMMSLIIGGSQA) form the signal peptide.

As to expression, expressed in fat body.

It is found in the secreted. Functionally, probably involved in the antiviral immune response. May have a role in controlling viral load in the adult fat body, after infection with viruses such as the Drosophila C virus. The polypeptide is Protein Vago (Drosophila melanogaster (Fruit fly)).